We begin with the raw amino-acid sequence, 186 residues long: Ribosome-recycling factor (186 aa).

Belongs to the RRF family.

It localises to the cytoplasm. Functionally, responsible for the release of ribosomes from messenger RNA at the termination of protein biosynthesis. May increase the efficiency of translation by recycling ribosomes from one round of translation to another. The polypeptide is Ribosome-recycling factor (Leifsonia xyli subsp. xyli (strain CTCB07)).